The sequence spans 355 residues: F-box only protein 32 (355 aa).

The short motif at 62-67 is the Nuclear localization signal element; sequence KKRKKD. The Nuclear export signal signature appears at 169–173; it reads LLQTL. The region spanning 223-271 is the F-box domain; it reads LTFTDLPLCLQLNIMQRLSDGRDLVSLGQVAPDLHVLSEDRLLWKKLCQ. A Bipartite nuclear localization signal motif is present at residues 280-295; the sequence is RKRLILSDKGQLDWKK.

In terms of assembly, part of the SCF (SKP1-CUL1-F-box) E3 ubiquitin-protein ligase complex SCF(FBXO32) formed of CUL1, SKP1, RBX1 and FBXO32.

It is found in the cytoplasm. It localises to the nucleus. It functions in the pathway protein modification; protein ubiquitination. Functionally, substrate recognition component of a SCF (SKP1-CUL1-F-box protein) E3 ubiquitin-protein ligase complex which mediates the ubiquitination and subsequent proteasomal degradation of target proteins. Probably recognizes and binds to phosphorylated target proteins during skeletal muscle atrophy. Recognizes TERF1. This Sus scrofa (Pig) protein is F-box only protein 32 (FBXO32).